Consider the following 491-residue polypeptide: Protein nucleotidyltransferase YdiU (491 aa).

Residues G94, G96, R97, K117, D129, G130, R180, and R187 each coordinate ATP. D256 serves as the catalytic Proton acceptor. 2 residues coordinate Mg(2+): N257 and D266. ATP is bound at residue D266.

The protein belongs to the SELO family. Mg(2+) is required as a cofactor. The cofactor is Mn(2+).

The enzyme catalyses L-seryl-[protein] + ATP = 3-O-(5'-adenylyl)-L-seryl-[protein] + diphosphate. It catalyses the reaction L-threonyl-[protein] + ATP = 3-O-(5'-adenylyl)-L-threonyl-[protein] + diphosphate. It carries out the reaction L-tyrosyl-[protein] + ATP = O-(5'-adenylyl)-L-tyrosyl-[protein] + diphosphate. The catalysed reaction is L-histidyl-[protein] + UTP = N(tele)-(5'-uridylyl)-L-histidyl-[protein] + diphosphate. The enzyme catalyses L-seryl-[protein] + UTP = O-(5'-uridylyl)-L-seryl-[protein] + diphosphate. It catalyses the reaction L-tyrosyl-[protein] + UTP = O-(5'-uridylyl)-L-tyrosyl-[protein] + diphosphate. Its function is as follows. Nucleotidyltransferase involved in the post-translational modification of proteins. It can catalyze the addition of adenosine monophosphate (AMP) or uridine monophosphate (UMP) to a protein, resulting in modifications known as AMPylation and UMPylation. This chain is Protein nucleotidyltransferase YdiU, found in Clostridium botulinum (strain Loch Maree / Type A3).